The chain runs to 444 residues: MAASTAAQVQLSEEALGLARIFENPKGSLEAASKLLQKNHDEFHVFWRDVGGHNHIPHSVLSILALGGGPAELQRAWDDGVAIQRPTPPLDEDVVKKLENPAEFRARIGSIPNYTNFLHFFRNQMDKKGWQAVVSEYAFSRTPLAETIFAQLFEGAYHPFIHIGFGIEFNLPSIIAEGLAQAATHDSAGIEGFFLEAERQAAQSKGPGKSLVQLLDEVRTTEKIKTAARLPDGPVRVRDGVIGRAGAEIAALASQFRVPADQLSRGAAESINISAYTAGAAQRAGKARKIDFFHMHNTTSSLFLTVFLNQPWISTEDKVRIVEWKGRLDLVWYAACSAPDLNVDHVIGYKPAQSAGWGWKELYEAINVAHDDGHLAKIVRALKNGEEVSRPFESGEGAEAFPIKGDSWLKLAQMSYDTTLDLPDDDKWIWGAGFLPLWNKVPSL.

It belongs to the questin oxidase family. NADPH serves as cofactor.

It functions in the pathway secondary metabolite biosynthesis. Baeyer-Villiger oxidase; part of the gene cluster that mediates the biosynthesis of pestheic acid, a diphenyl ether which is a biosynthetic precursor of the unique chloropupukeananes. The biosynthesis initiates from condensation of acetate and malonate units catalyzed by the non-reducing PKS ptaA. As the ptaA protein is TE/CLC domain-deficient, hydrolysis and Claisen cyclization of the polyketide could be catalyzed by ptaB containing a beta-lactamase domain. The ptaB protein might hydrolyze the thioester bond between the ACP of ptaA and the intermediate to release atrochrysone carboxylic acid, which is spontaneously dehydrated to form endocrocin anthrone. Endocrocin anthrone is then converted to endocrocin, catalyzed by the anthrone oxygenase ptaC. Spontaneous decarboxylation of endocrocin occurs to generate emodin. An O-methyltransferase (ptaH or ptaI) could methylate emodin to form physcion. PtaJ could then catalyze the oxidative cleavage of physcion, and rotation of the intermediate could then afford desmethylisosulochrin. PtaF, a putative NADH-dependent oxidoreductase, might also participate in the oxidative cleavage step. Desmethylisosulochrin is then transformed by another O-methyltransferase (ptaH or ptaI) to form isosulochrin. Chlorination of isosulochrin by ptaM in the cyclohexadienone B ring then produces chloroisosulochrin. PtaE is responsible for the oxidative coupling reactions of both benzophenones isosulouchrin and chloroisosulouchrin to RES-1214-1 and pestheic acid respectively, regardless of chlorination. This is Baeyer-Villiger oxidase ptaJ from Pestalotiopsis fici (strain W106-1 / CGMCC3.15140).